The sequence spans 85 residues: High affinity immunoglobulin epsilon receptor subunit gamma (85 aa).

A signal peptide spans 1 to 18; it reads MIPAVVLLLLLLVEQAAA. Over 19 to 23 the chain is Extracellular; the sequence is LGEPQ. Residues 24 to 44 form a helical membrane-spanning segment; that stretch reads LCYILDAILFLYGIVLTLLYC. The Cytoplasmic portion of the chain corresponds to 45–85; it reads RLKLQVRKAATASEKSDGIYTGLSTRTQETYETLKHEKPPQ. Positions 53 to 81 constitute an ITAM domain; that stretch reads AATASEKSDGIYTGLSTRTQETYETLKHE. A Phosphotyrosine modification is found at Tyr64. Ser68 is subject to Phosphoserine. Residue Tyr75 is modified to Phosphotyrosine. Thr77 carries the phosphothreonine modification.

The protein belongs to the CD3Z/FCER1G family. In terms of assembly, igE Fc receptor is a tetramer of an alpha chain, a beta chain, and two disulfide linked gamma chains. Associates with FCGR1A; forms a functional signaling complex. The signaling subunit of immunoglobulin gamma (IgG) Fc receptor complex. As a homodimer or a heterodimer of CD247 and FCER1G, associates with the ligand binding subunit FCGR3A to form a functional receptor complex. Associates with CLEC6A. Interacts with CLEC4E. Interacts (via ITAM domain) with SYK (via SH2 domains); activates SYK, enabling integrin-mediated activation of neutrophils and macrophages. Interacts with CSF2RB and recruits SYK in response to IL3 stimulation; this interaction is direct. Interacts with CD300LH; the interaction may be indirect. Interacts with CD300LD. Interacts with TARM1.

The protein resides in the cell membrane. Functionally, adapter protein containing an immunoreceptor tyrosine-based activation motif (ITAM) that transduces activation signals from various immunoreceptors. As a component of the high-affinity immunoglobulin E (IgE) receptor, mediates allergic inflammatory signaling in mast cells. As a constitutive component of interleukin-3 receptor complex, selectively mediates interleukin 4/IL4 production by basophils priming T-cells toward effector T-helper 2 subset. Associates with pattern recognition receptors CLEC4D and CLEC4E to form a functional signaling complex in myeloid cells. Binding of mycobacterial trehalose 6,6'-dimycolate (TDM) to this receptor complex leads to phosphorylation of ITAM, triggering activation of SYK, CARD9 and NF-kappa-B, consequently driving maturation of antigen-presenting cells and shaping antigen-specific priming of T-cells toward effector T-helper 1 and T-helper 17 cell subtypes. May function cooperatively with other activating receptors. Functionally linked to integrin beta-2/ITGB2-mediated neutrophil activation. Also involved in integrin alpha-2/ITGA2-mediated platelet activation. The polypeptide is High affinity immunoglobulin epsilon receptor subunit gamma (FCER1G) (Bos taurus (Bovine)).